The following is a 260-amino-acid chain: Coiled-coil domain-containing protein 127 (260 aa).

A coiled-coil region spans residues 47-135 (ESQKEIEKAR…QIIQEKSQRQ (89 aa)).

The protein is Coiled-coil domain-containing protein 127 (Ccdc127) of Rattus norvegicus (Rat).